A 335-amino-acid chain; its full sequence is Probable BOI-related E3 ubiquitin-protein ligase 3 (335 aa).

Residues 196-232 form a WRD domain region; the sequence is LEEKVKSLCVENQIWRDVAQSNEATVNALRSNLQQVL. An RING-type zinc finger spans residues 287–322; the sequence is CRSCGKGEASVLLLPCRHMCLCSVCGSSLNTCPICK.

In terms of assembly, interacts with the DELLA proteins GAI, RGA, RGL1, RGL2 and RGL3.

The enzyme catalyses S-ubiquitinyl-[E2 ubiquitin-conjugating enzyme]-L-cysteine + [acceptor protein]-L-lysine = [E2 ubiquitin-conjugating enzyme]-L-cysteine + N(6)-ubiquitinyl-[acceptor protein]-L-lysine.. It participates in protein degradation; proteasomal ubiquitin-dependent pathway. In terms of biological role, probable E3 ubiquitin-protein ligase. Has no effect on the stability of the DELLA proteins. The polypeptide is Probable BOI-related E3 ubiquitin-protein ligase 3 (BRG3) (Arabidopsis thaliana (Mouse-ear cress)).